Reading from the N-terminus, the 659-residue chain is tRNA-guanine(15) transglycosylase (659 aa).

The active-site Nucleophile is Asp-84. Asp-119 and Ala-190 together coordinate substrate. Zn(2+)-binding residues include Cys-273, Cys-275, and Cys-278. The 76-residue stretch at 583–658 folds into the PUA domain; that stretch reads KNRVVVNKDS…QAIKTRKGMK (76 aa).

It belongs to the archaeosine tRNA-ribosyltransferase family. Requires Zn(2+) as cofactor.

The enzyme catalyses guanosine(15) in tRNA + 7-cyano-7-deazaguanine = 7-cyano-7-carbaguanosine(15) in tRNA + guanine. The protein operates within tRNA modification; archaeosine-tRNA biosynthesis. Exchanges the guanine residue with 7-cyano-7-deazaguanine (preQ0) at position 15 in the dihydrouridine loop (D-loop) of archaeal tRNAs. In Methanobrevibacter smithii (strain ATCC 35061 / DSM 861 / OCM 144 / PS), this protein is tRNA-guanine(15) transglycosylase.